The following is a 195-amino-acid chain: Protein Nef (195 aa).

Residue glycine 2 is the site of N-myristoyl glycine; by host attachment. Positions 2–53 (GNIFGRWPGARKAIEDLHNTSSEPVGQASQDLQNKGGLTTNTLGTSADVLEY) are N-terminal; associates with the host plasma membrane. The interval 7 to 22 (RWPGARKAIEDLHNTS) is necessary for MHC-I internalization. Residues 59-61 (EEE) form an acidic region. The interval 65–74 (PVRPAVPMRP) is SH3-binding. The interval 65–74 (PVRPAVPMRP) is SH3-binding; interaction with Src family tyrosine kinases. The PxxP signature appears at 68–71 (PAVP). The mediates dimerization stretch occupies residues 104–120 (AILDTWMYNTQGVFPDW). Residues 144–171 (VDPPEDDEKNILLHPACSHGTTDPDGET) are binding to ATP6V1H. The Di-leucine internalization motif; necessary for CD4 internalization motif lies at 155–156 (LL).

It belongs to the lentivirus primate group Nef protein family. In terms of assembly, homodimer.

Its subcellular location is the host cell membrane. It is found in the host cytoplasm. It localises to the host perinuclear region. The protein resides in the virion. The protein localises to the secreted. Functionally, factor of infectivity and pathogenicity, required for optimal virus replication. Alters numerous pathways of T-lymphocyte function and down-regulates immunity surface molecules in order to evade host defense and increase viral infectivity. Alters the functionality of other immunity cells, like dendritic cells, monocytes/macrophages and NK cells. One of the earliest and most abundantly expressed viral proteins. In infected CD4(+) T-lymphocytes, down-regulates the surface MHC-I, mature MHC-II, CD4, CD28 and probably other immunity surface molecules. In consequence infected cells are masked for immune recognition by cytotoxic T-lymphocytes. Decreasing the number of immune receptors also prevents reinfection by more HIV particles (superinfection). Its function is as follows. Bypasses host T-cell signaling by inducing a transcriptional program nearly identical to that of anti-CD3 cell activation. Interaction with TCR-zeta chain up-regulates the Fas ligand (FasL). Increasing surface FasL molecules and decreasing surface MHC-I molecules on infected CD4(+) cells send attacking cytotoxic CD8+ T-lymphocytes into apoptosis. In terms of biological role, plays a role in optimizing the host cell environment for viral replication without causing cell death by apoptosis. Protects the infected cells from apoptosis in order to keep them alive until the next virus generation is ready to strike. The protein is Protein Nef of Pan troglodytes (Chimpanzee).